Consider the following 363-residue polypeptide: UDP-N-acetylglucosamine--N-acetylmuramyl-(pentapeptide) pyrophosphoryl-undecaprenol N-acetylglucosamine transferase (363 aa).

UDP-N-acetyl-alpha-D-glucosamine contacts are provided by residues 21–23, Asn129, Arg170, Ser196, and Gln290; that span reads TGG.

The protein belongs to the glycosyltransferase 28 family. MurG subfamily.

The protein localises to the cell inner membrane. It carries out the reaction di-trans,octa-cis-undecaprenyl diphospho-N-acetyl-alpha-D-muramoyl-L-alanyl-D-glutamyl-meso-2,6-diaminopimeloyl-D-alanyl-D-alanine + UDP-N-acetyl-alpha-D-glucosamine = di-trans,octa-cis-undecaprenyl diphospho-[N-acetyl-alpha-D-glucosaminyl-(1-&gt;4)]-N-acetyl-alpha-D-muramoyl-L-alanyl-D-glutamyl-meso-2,6-diaminopimeloyl-D-alanyl-D-alanine + UDP + H(+). It participates in cell wall biogenesis; peptidoglycan biosynthesis. Functionally, cell wall formation. Catalyzes the transfer of a GlcNAc subunit on undecaprenyl-pyrophosphoryl-MurNAc-pentapeptide (lipid intermediate I) to form undecaprenyl-pyrophosphoryl-MurNAc-(pentapeptide)GlcNAc (lipid intermediate II). This Synechococcus sp. (strain ATCC 27144 / PCC 6301 / SAUG 1402/1) (Anacystis nidulans) protein is UDP-N-acetylglucosamine--N-acetylmuramyl-(pentapeptide) pyrophosphoryl-undecaprenol N-acetylglucosamine transferase.